Reading from the N-terminus, the 172-residue chain is uncharacterized protein (172 aa).

The first 21 residues, 1–21, serve as a signal peptide directing secretion; that stretch reads MMKFKKCLLPVAMLASFTLAG. A lipid anchor (N-palmitoyl cysteine) is attached at cysteine 22. The S-diacylglycerol cysteine moiety is linked to residue cysteine 22.

The protein localises to the cell membrane. This is an uncharacterized protein from Escherichia coli O157:H7.